A 215-amino-acid polypeptide reads, in one-letter code: Cytochrome b6 (215 aa).

A helical membrane pass occupies residues 32–52 (IFYCLGGITLTCFLVQVATGF). C35 is a heme c binding site. Residues H86 and H100 each coordinate heme b. A run of 3 helical transmembrane segments spans residues 90–110 (ASMMVLMMILHVFRVYLTGGF), 116–136 (LTWVTGVVLAVLTASFGVTGY), and 186–206 (LHTFVLPLLTAVFMLMHFPMI). Heme b contacts are provided by H187 and H202.

It belongs to the cytochrome b family. PetB subfamily. As to quaternary structure, the 4 large subunits of the cytochrome b6-f complex are cytochrome b6, subunit IV (17 kDa polypeptide, PetD), cytochrome f and the Rieske protein, while the 4 small subunits are PetG, PetL, PetM and PetN. The complex functions as a dimer. Heme b is required as a cofactor. It depends on heme c as a cofactor.

Its subcellular location is the plastid. The protein localises to the chloroplast thylakoid membrane. Its function is as follows. Component of the cytochrome b6-f complex, which mediates electron transfer between photosystem II (PSII) and photosystem I (PSI), cyclic electron flow around PSI, and state transitions. The polypeptide is Cytochrome b6 (Phalaenopsis aphrodite subsp. formosana (Moth orchid)).